We begin with the raw amino-acid sequence, 620 residues long: 1-deoxy-D-xylulose-5-phosphate synthase (620 aa).

Thiamine diphosphate contacts are provided by residues histidine 80 and 121-123 (GHS). Aspartate 152 provides a ligand contact to Mg(2+). Thiamine diphosphate-binding positions include 153 to 154 (GA), asparagine 181, tyrosine 288, and glutamate 370. Asparagine 181 is a binding site for Mg(2+).

This sequence belongs to the transketolase family. DXPS subfamily. Homodimer. It depends on Mg(2+) as a cofactor. Thiamine diphosphate serves as cofactor.

It carries out the reaction D-glyceraldehyde 3-phosphate + pyruvate + H(+) = 1-deoxy-D-xylulose 5-phosphate + CO2. Its pathway is metabolic intermediate biosynthesis; 1-deoxy-D-xylulose 5-phosphate biosynthesis; 1-deoxy-D-xylulose 5-phosphate from D-glyceraldehyde 3-phosphate and pyruvate: step 1/1. Functionally, catalyzes the acyloin condensation reaction between C atoms 2 and 3 of pyruvate and glyceraldehyde 3-phosphate to yield 1-deoxy-D-xylulose-5-phosphate (DXP). The chain is 1-deoxy-D-xylulose-5-phosphate synthase from Escherichia fergusonii (strain ATCC 35469 / DSM 13698 / CCUG 18766 / IAM 14443 / JCM 21226 / LMG 7866 / NBRC 102419 / NCTC 12128 / CDC 0568-73).